Here is a 142-residue protein sequence, read N- to C-terminus: Holo-[acyl-carrier-protein] synthase (142 aa).

Positions 9 and 63 each coordinate Mg(2+).

The protein belongs to the P-Pant transferase superfamily. AcpS family. Mg(2+) is required as a cofactor.

It is found in the cytoplasm. It carries out the reaction apo-[ACP] + CoA = holo-[ACP] + adenosine 3',5'-bisphosphate + H(+). Its function is as follows. Transfers the 4'-phosphopantetheine moiety from coenzyme A to a Ser of acyl-carrier-protein. This chain is Holo-[acyl-carrier-protein] synthase, found in Burkholderia lata (strain ATCC 17760 / DSM 23089 / LMG 22485 / NCIMB 9086 / R18194 / 383).